Here is a 477-residue protein sequence, read N- to C-terminus: Argininosuccinate synthase (477 aa).

ATP is bound by residues 17-25 and Ala-43; that span reads AFSGGLDTS. Tyr-99 contacts L-citrulline. The ATP site is built by Gly-129 and Thr-131. Positions 131, 135, and 136 each coordinate L-aspartate. Position 135 (Asn-135) interacts with L-citrulline. Asp-136 serves as a coordination point for ATP. Arg-139 and Ser-192 together coordinate L-citrulline. Residue Asp-194 participates in ATP binding. Residues Thr-201, Glu-203, and Glu-280 each contribute to the L-citrulline site. Residues 450–477 form a disordered region; that stretch reads DQITENPEVQAEPEEEALDAAAMEAGTD. The segment covering 468 to 477 has biased composition (low complexity); sequence DAAAMEAGTD.

This sequence belongs to the argininosuccinate synthase family. Type 2 subfamily. As to quaternary structure, homotetramer.

It is found in the cytoplasm. It catalyses the reaction L-citrulline + L-aspartate + ATP = 2-(N(omega)-L-arginino)succinate + AMP + diphosphate + H(+). Its pathway is amino-acid biosynthesis; L-arginine biosynthesis; L-arginine from L-ornithine and carbamoyl phosphate: step 2/3. In Nocardioides sp. (strain ATCC BAA-499 / JS614), this protein is Argininosuccinate synthase.